A 65-amino-acid polypeptide reads, in one-letter code: Diapause-specific peptide (65 aa).

Positions 1–24 (MGAALKMTIFLLIVACAMIATTEA) are cleaved as a signal peptide. 3 disulfides stabilise this stretch: C31-C45, C35-C57, and C46-C64.

In terms of tissue distribution, highly expressed in the fat body.

The protein resides in the secreted. Functionally, has antifungal activity against T.rubrum. Blocks voltage-dependent N-type calcium channels (Cav2.2 / CACNA1B). This is Diapause-specific peptide from Gastrophysa atrocyanea (Leaf beetle).